Consider the following 115-residue polypeptide: Colicin-Ib immunity protein (115 aa).

The next 3 helical transmembrane spans lie at 7 to 27 (VKYLLKSLIPILIILTVFYLG), 38 to 58 (FYAFIGCIISAITFPFSMRII), and 87 to 107 (IFELFCFVISVPVVAIYLIFI).

It is found in the cell membrane. Functionally, this protein is able to protect a cell, which harbors the plasmid IncI1 ColIb-P9 encoding colicin Ib, against colicin Ib. The protein is Colicin-Ib immunity protein of Escherichia coli.